A 782-amino-acid polypeptide reads, in one-letter code: Formin-like protein 9 (782 aa).

The first 24 residues, 1 to 24, serve as a signal peptide directing secretion; it reads MQNFWFAIFFFLLTCAPPSPLSYA. A helical transmembrane segment spans residues 102-122; the sequence is LLLPALSAVLVIATVIGLALF. Disordered regions lie at residues 191–223, 264–287, and 387–407; these read DSPEIRPLPPLPPRSFHHNNYETEVNEEDEEEE, MSPPNPRYSDATNLQSPSPERLRV, and SSSQQSKVPALPPPTRPPPLV. Positions 214–223 are enriched in acidic residues; sequence EVNEEDEEEE. Positions 396-407 are enriched in pro residues; that stretch reads ALPPPTRPPPLV. The region spanning 406 to 782 is the FH2 domain; sequence LVPPSQPFVV…LDQVCKEMGD (377 aa).

It belongs to the formin-like family. Class-I subfamily.

The protein localises to the membrane. Functionally, might be involved in the organization and polarity of the actin cytoskeleton. The protein is Formin-like protein 9 (FH9) of Arabidopsis thaliana (Mouse-ear cress).